Here is a 691-residue protein sequence, read N- to C-terminus: DNA ligase (691 aa).

Residues 36 to 40 (DAEYD), 85 to 86 (SL), and Glu118 each bind NAD(+). Lys120 functions as the N6-AMP-lysine intermediate in the catalytic mechanism. Positions 141, 178, 295, and 319 each coordinate NAD(+). Zn(2+) is bound by residues Cys413, Cys416, Cys431, and Cys437. The region spanning 595–684 (GRPQPLAGQT…ESASSEDAQP (90 aa)) is the BRCT domain.

This sequence belongs to the NAD-dependent DNA ligase family. LigA subfamily. Mg(2+) is required as a cofactor. It depends on Mn(2+) as a cofactor.

The enzyme catalyses NAD(+) + (deoxyribonucleotide)n-3'-hydroxyl + 5'-phospho-(deoxyribonucleotide)m = (deoxyribonucleotide)n+m + AMP + beta-nicotinamide D-nucleotide.. In terms of biological role, DNA ligase that catalyzes the formation of phosphodiester linkages between 5'-phosphoryl and 3'-hydroxyl groups in double-stranded DNA using NAD as a coenzyme and as the energy source for the reaction. It is essential for DNA replication and repair of damaged DNA. In Chromohalobacter salexigens (strain ATCC BAA-138 / DSM 3043 / CIP 106854 / NCIMB 13768 / 1H11), this protein is DNA ligase.